Reading from the N-terminus, the 187-residue chain is Protein ECM23 (187 aa).

Disordered regions lie at residues Gly-106–Gly-127 and Lys-167–Lys-187. The GATA-type zinc finger occupies Asn-126–Lys-180.

In terms of biological role, involved in morphogenesis. May be involved in cell wall organization and biogenesis. The chain is Protein ECM23 (ECM23) from Saccharomyces cerevisiae (strain ATCC 204508 / S288c) (Baker's yeast).